We begin with the raw amino-acid sequence, 183 residues long: Dual-action ribosomal maturation protein DarP (183 aa).

The protein belongs to the DarP family.

The protein localises to the cytoplasm. In terms of biological role, member of a network of 50S ribosomal subunit biogenesis factors which assembles along the 30S-50S interface, preventing incorrect 23S rRNA structures from forming. Promotes peptidyl transferase center (PTC) maturation. This is Dual-action ribosomal maturation protein DarP from Salmonella arizonae (strain ATCC BAA-731 / CDC346-86 / RSK2980).